A 154-amino-acid chain; its full sequence is Deoxyuridine 5'-triphosphate nucleotidohydrolase (154 aa).

Residues 72–74 (RSG), N85, 89–91 (LID), and M99 contribute to the substrate site.

Belongs to the dUTPase family. Requires Mg(2+) as cofactor.

The catalysed reaction is dUTP + H2O = dUMP + diphosphate + H(+). It functions in the pathway pyrimidine metabolism; dUMP biosynthesis; dUMP from dCTP (dUTP route): step 2/2. Functionally, this enzyme is involved in nucleotide metabolism: it produces dUMP, the immediate precursor of thymidine nucleotides and it decreases the intracellular concentration of dUTP so that uracil cannot be incorporated into DNA. The polypeptide is Deoxyuridine 5'-triphosphate nucleotidohydrolase (Psychrobacter arcticus (strain DSM 17307 / VKM B-2377 / 273-4)).